Consider the following 440-residue polypeptide: Trigger factor (440 aa).

Positions Gly163–Pro248 constitute a PPIase FKBP-type domain.

It belongs to the FKBP-type PPIase family. Tig subfamily.

It is found in the cytoplasm. The enzyme catalyses [protein]-peptidylproline (omega=180) = [protein]-peptidylproline (omega=0). Functionally, involved in protein export. Acts as a chaperone by maintaining the newly synthesized protein in an open conformation. Functions as a peptidyl-prolyl cis-trans isomerase. This chain is Trigger factor, found in Trichlorobacter lovleyi (strain ATCC BAA-1151 / DSM 17278 / SZ) (Geobacter lovleyi).